Reading from the N-terminus, the 155-residue chain is Probable calcium-binding protein CML9 (155 aa).

3 EF-hand domains span residues 8-43 (EQVD…LGQN), 86-121 (ATEK…HGDR), and 122-155 (LTEE…MNNK). 5 residues coordinate Ca(2+): Asp21, Asp23, Asp25, Arg27, and Glu32.

Its function is as follows. Potential calcium sensor. The protein is Probable calcium-binding protein CML9 (CML9) of Oryza sativa subsp. japonica (Rice).